Consider the following 465-residue polypeptide: Uronate isomerase (465 aa).

The protein belongs to the metallo-dependent hydrolases superfamily. Uronate isomerase family.

It catalyses the reaction D-glucuronate = D-fructuronate. The enzyme catalyses aldehydo-D-galacturonate = keto-D-tagaturonate. The protein operates within carbohydrate metabolism; pentose and glucuronate interconversion. This is Uronate isomerase from Streptococcus equi subsp. equi (strain 4047).